The following is a 173-amino-acid chain: ATP synthase subunit b (173 aa).

Residues 20–40 form a helical membrane-spanning segment; sequence IIATLAIFLVLMFLLKKVAWG.

This sequence belongs to the ATPase B chain family. As to quaternary structure, F-type ATPases have 2 components, F(1) - the catalytic core - and F(0) - the membrane proton channel. F(1) has five subunits: alpha(3), beta(3), gamma(1), delta(1), epsilon(1). F(0) has three main subunits: a(1), b(2) and c(10-14). The alpha and beta chains form an alternating ring which encloses part of the gamma chain. F(1) is attached to F(0) by a central stalk formed by the gamma and epsilon chains, while a peripheral stalk is formed by the delta and b chains.

It localises to the cell membrane. Its function is as follows. F(1)F(0) ATP synthase produces ATP from ADP in the presence of a proton or sodium gradient. F-type ATPases consist of two structural domains, F(1) containing the extramembraneous catalytic core and F(0) containing the membrane proton channel, linked together by a central stalk and a peripheral stalk. During catalysis, ATP synthesis in the catalytic domain of F(1) is coupled via a rotary mechanism of the central stalk subunits to proton translocation. Component of the F(0) channel, it forms part of the peripheral stalk, linking F(1) to F(0). The polypeptide is ATP synthase subunit b (Lysinibacillus sphaericus (strain C3-41)).